The chain runs to 335 residues: Transcription factor IIIA (335 aa).

9 consecutive C2H2-type zinc fingers follow at residues 13-37 (YICSFADCSASYNKNWKLQAHLCKH), 43-67 (FPCTVEGCGKGFVTLFHLTRHSMTH), 73-98 (CKCDAPDCDLSFTTMTNLRKHYQRAH), 105-129 (YECYFADCGQTFKKHNQLKLHQYIH), 135-159 (FKCNHEGCDKSFSSPSRLKRHEKVH), 162-188 (YPCQKDSSCSFVGKTWTEYMKHLAASH), 192-214 (TICDVCNRKFKNKTHLKDHKRTH), 221-246 (YKCPRDGCDRTYTKKFGLQSHILSFH), and 252-276 (FACGHPGCGKTFAMKQSLDRHANTH). Residues 269-280 (LDRHANTHDPEK) show a composition bias toward basic and acidic residues. The disordered stretch occupies residues 269-335 (LDRHANTHDP…ATAMQNLSIK (67 aa)). Residues 281 to 292 (KKMKKPRPKKSL) show a composition bias toward basic residues.

The protein localises to the nucleus. Its function is as follows. Involved in ribosomal large subunit biogenesis. Interacts with the internal control region (ICR) of approximately 50 bases within the 5S RNA genes, is required for correct transcription of these genes by RNA polymerase III. Also binds the transcribed 5S RNA's. The protein is Transcription factor IIIA (gtf3a) of Lithobates pipiens (Northern leopard frog).